We begin with the raw amino-acid sequence, 341 residues long: ATPase GET3 (341 aa).

34-41 lines the ATP pocket; the sequence is KGGVGKTT. D63 is an active-site residue. ATP is bound by residues E245 and N272. Residues C283 and C286 each coordinate Zn(2+).

It belongs to the arsA ATPase family. In terms of assembly, homodimer.

Its subcellular location is the cytoplasm. It localises to the endoplasmic reticulum. ATPase required for the post-translational delivery of tail-anchored (TA) proteins to the endoplasmic reticulum. Recognizes and selectively binds the transmembrane domain of TA proteins in the cytosol. This complex then targets to the endoplasmic reticulum by membrane-bound receptors, where the tail-anchored protein is released for insertion. This process is regulated by ATP binding and hydrolysis. ATP binding drives the homodimer towards the closed dimer state, facilitating recognition of newly synthesized TA membrane proteins. ATP hydrolysis is required for insertion. Subsequently, the homodimer reverts towards the open dimer state, lowering its affinity for the membrane-bound receptor, and returning it to the cytosol to initiate a new round of targeting. This chain is ATPase GET3, found in Paracoccidioides lutzii (strain ATCC MYA-826 / Pb01) (Paracoccidioides brasiliensis).